A 51-amino-acid chain; its full sequence is Large ribosomal subunit protein bL33 (51 aa).

Positions 1-21 (MRDKIKLESGAGTGHFYTTTK) are disordered.

The protein belongs to the bacterial ribosomal protein bL33 family.

This is Large ribosomal subunit protein bL33 from Neisseria gonorrhoeae (strain ATCC 700825 / FA 1090).